The sequence spans 469 residues: Glutamate--tRNA ligase (469 aa).

The short motif at 10-20 is the 'HIGH' region element; it reads PSPTGYLHVGG. Residues Cys-99, Cys-101, Cys-126, and Asp-128 each contribute to the Zn(2+) site. A 'KMSKS' region motif is present at residues 238–242; the sequence is RLSKR. Lys-241 is an ATP binding site.

It belongs to the class-I aminoacyl-tRNA synthetase family. Glutamate--tRNA ligase type 1 subfamily. In terms of assembly, monomer. Zn(2+) is required as a cofactor.

It localises to the cytoplasm. It carries out the reaction tRNA(Glu) + L-glutamate + ATP = L-glutamyl-tRNA(Glu) + AMP + diphosphate. Catalyzes the attachment of glutamate to tRNA(Glu) in a two-step reaction: glutamate is first activated by ATP to form Glu-AMP and then transferred to the acceptor end of tRNA(Glu). This chain is Glutamate--tRNA ligase, found in Pelobacter propionicus (strain DSM 2379 / NBRC 103807 / OttBd1).